A 127-amino-acid polypeptide reads, in one-letter code: uncharacterized protein (127 aa).

The chain crosses the membrane as a helical span at residues 5-25; that stretch reads ILGITIAFIILLLTTVAILFS.

The protein localises to the membrane. This is an uncharacterized protein from Mycoplasma genitalium (strain ATCC 33530 / DSM 19775 / NCTC 10195 / G37) (Mycoplasmoides genitalium).